An 888-amino-acid polypeptide reads, in one-letter code: Bifunctional uridylyltransferase/uridylyl-removing enzyme (888 aa).

The uridylyltransferase stretch occupies residues 1–348; sequence MATTTDKQVS…YHFAEDKIEP (348 aa). Residues 349–709 are uridylyl-removing; sequence INPRFRIINN…LQPTTSRGAT (361 aa). One can recognise an HD domain in the interval 468–590; it reads VDEHTILVIR…VGTQQRLDYL (123 aa). ACT domains lie at 710-787 and 817-888; these read ELII…DDTM and ELSI…NIEQ.

The protein belongs to the GlnD family. It depends on Mg(2+) as a cofactor.

It catalyses the reaction [protein-PII]-L-tyrosine + UTP = [protein-PII]-uridylyl-L-tyrosine + diphosphate. The catalysed reaction is [protein-PII]-uridylyl-L-tyrosine + H2O = [protein-PII]-L-tyrosine + UMP + H(+). With respect to regulation, uridylyltransferase (UTase) activity is inhibited by glutamine, while glutamine activates uridylyl-removing (UR) activity. Modifies, by uridylylation and deuridylylation, the PII regulatory proteins (GlnB and homologs), in response to the nitrogen status of the cell that GlnD senses through the glutamine level. Under low glutamine levels, catalyzes the conversion of the PII proteins and UTP to PII-UMP and PPi, while under higher glutamine levels, GlnD hydrolyzes PII-UMP to PII and UMP (deuridylylation). Thus, controls uridylylation state and activity of the PII proteins, and plays an important role in the regulation of nitrogen assimilation and metabolism. The chain is Bifunctional uridylyltransferase/uridylyl-removing enzyme from Hydrogenovibrio crunogenus (strain DSM 25203 / XCL-2) (Thiomicrospira crunogena).